We begin with the raw amino-acid sequence, 267 residues long: Acetyl-coenzyme A carboxylase carboxyl transferase subunit beta, chloroplastic (267 aa).

Residues 12 to 267 (LWKKCDSCNI…TIHMILDLHN (256 aa)) form the CoA carboxyltransferase N-terminal domain. Residues Cys16, Cys19, Cys35, and Cys38 each coordinate Zn(2+). A C4-type zinc finger spans residues 16–38 (CDSCNILISKFDFYKHDKVCPEC).

This sequence belongs to the AccD/PCCB family. As to quaternary structure, acetyl-CoA carboxylase is a heterohexamer composed of biotin carboxyl carrier protein, biotin carboxylase and 2 subunits each of ACCase subunit alpha and ACCase plastid-coded subunit beta (accD). Requires Zn(2+) as cofactor.

The protein resides in the plastid. The protein localises to the chloroplast stroma. It catalyses the reaction N(6)-carboxybiotinyl-L-lysyl-[protein] + acetyl-CoA = N(6)-biotinyl-L-lysyl-[protein] + malonyl-CoA. It participates in lipid metabolism; malonyl-CoA biosynthesis; malonyl-CoA from acetyl-CoA: step 1/1. Functionally, component of the acetyl coenzyme A carboxylase (ACC) complex. Biotin carboxylase (BC) catalyzes the carboxylation of biotin on its carrier protein (BCCP) and then the CO(2) group is transferred by the transcarboxylase to acetyl-CoA to form malonyl-CoA. The polypeptide is Acetyl-coenzyme A carboxylase carboxyl transferase subunit beta, chloroplastic (Cyanidium caldarium (Red alga)).